Consider the following 341-residue polypeptide: Phosphate acyltransferase (341 aa).

Belongs to the PlsX family. Homodimer. Probably interacts with PlsY.

The protein resides in the cytoplasm. It carries out the reaction a fatty acyl-[ACP] + phosphate = an acyl phosphate + holo-[ACP]. Its pathway is lipid metabolism; phospholipid metabolism. Catalyzes the reversible formation of acyl-phosphate (acyl-PO(4)) from acyl-[acyl-carrier-protein] (acyl-ACP). This enzyme utilizes acyl-ACP as fatty acyl donor, but not acyl-CoA. In Elusimicrobium minutum (strain Pei191), this protein is Phosphate acyltransferase.